A 137-amino-acid polypeptide reads, in one-letter code: uncharacterized protein (137 aa).

The next 2 helical transmembrane spans lie at 36–52 and 113–129; these read LAPPADVCIFFLFPFVL and FYGYVPIFSAFGIIFCF.

The protein resides in the membrane. This is an uncharacterized protein from Saccharomyces cerevisiae (strain ATCC 204508 / S288c) (Baker's yeast).